We begin with the raw amino-acid sequence, 439 residues long: Glutamine synthetase (439 aa).

Residues 12 to 93 (RSPKFVQLIF…VYGYIYKDGK (82 aa)) form the GS beta-grasp domain. The region spanning 99–439 (PRGVLKRVIE…EWELERYFFI (341 aa)) is the GS catalytic domain. Mg(2+) is bound by residues Glu-122 and Glu-124. Glu-172 serves as a coordination point for ATP. The Mg(2+) site is built by Glu-177 and Glu-184. Gly-229 contributes to the L-glutamate binding site. Mg(2+) is bound at residue His-233. Residues 235–237 (HIS) and Ser-237 contribute to the ATP site. Positions 283, 289, and 301 each coordinate L-glutamate. ATP-binding residues include Arg-301 and Arg-306. Position 318 (Glu-318) interacts with Mg(2+). Residue Arg-320 participates in L-glutamate binding.

This sequence belongs to the glutamine synthetase family. Oligomer of 12 subunits arranged in the form of two hexagons. Requires Mg(2+) as cofactor.

Its subcellular location is the cytoplasm. The catalysed reaction is L-glutamate + NH4(+) + ATP = L-glutamine + ADP + phosphate + H(+). Probably involved in nitrogen metabolism via ammonium assimilation. Catalyzes the ATP-dependent biosynthesis of glutamine from glutamate and ammonia. This Pyrococcus abyssi (strain GE5 / Orsay) protein is Glutamine synthetase.